Here is a 75-residue protein sequence, read N- to C-terminus: Sec-independent protein translocase protein TatA (75 aa).

A helical transmembrane segment spans residues 1-21 (MGGISIWQLLIIVAIIVLLFG). The disordered stretch occupies residues 50–75 (DAEFKSLNKDESATAGSEKVKDKEQA).

This sequence belongs to the TatA/E family. As to quaternary structure, the Tat system comprises two distinct complexes: a TatABC complex, containing multiple copies of TatA, TatB and TatC subunits, and a separate TatA complex, containing only TatA subunits. Substrates initially bind to the TatABC complex, which probably triggers association of the separate TatA complex to form the active translocon.

It localises to the cell inner membrane. Its function is as follows. Part of the twin-arginine translocation (Tat) system that transports large folded proteins containing a characteristic twin-arginine motif in their signal peptide across membranes. TatA could form the protein-conducting channel of the Tat system. This is Sec-independent protein translocase protein TatA from Mannheimia succiniciproducens (strain KCTC 0769BP / MBEL55E).